Consider the following 241-residue polypeptide: Proteasome subunit beta type-1 (241 aa).

N-acetylmethionine is present on Met-1. Positions Met-1–Leu-28 are excised as a propeptide. A glycan (O-linked (GlcNAc) serine) is linked at Ser-58. 2 positions are modified to phosphoserine: Ser-62 and Ser-68. Tyr-150 carries the phosphotyrosine modification. At Ser-162 the chain carries Phosphoserine. Lys-204 carries the post-translational modification N6-acetyllysine. Ser-209 is a glycosylation site (O-linked (GlcNAc) serine).

Belongs to the peptidase T1B family. The 26S proteasome consists of a 20S proteasome core and two 19S regulatory subunits. The 20S proteasome core is a barrel-shaped complex made of 28 subunits that are arranged in four stacked rings. The two outer rings are each formed by seven alpha subunits, and the two inner rings are formed by seven beta subunits. The proteolytic activity is exerted by three beta-subunits PSMB5, PSMB6 and PSMB7. Interacts with SERPINB2. Interacts with RFPL4A. As to quaternary structure, (Microbial infection) Interacts with HIV-1 protein Tat.

The protein resides in the cytoplasm. It is found in the nucleus. Functionally, non-catalytic component of the 20S core proteasome complex involved in the proteolytic degradation of most intracellular proteins. This complex plays numerous essential roles within the cell by associating with different regulatory particles. Associated with two 19S regulatory particles, forms the 26S proteasome and thus participates in the ATP-dependent degradation of ubiquitinated proteins. The 26S proteasome plays a key role in the maintenance of protein homeostasis by removing misfolded or damaged proteins that could impair cellular functions, and by removing proteins whose functions are no longer required. Associated with the PA200 or PA28, the 20S proteasome mediates ubiquitin-independent protein degradation. This type of proteolysis is required in several pathways including spermatogenesis (20S-PA200 complex) or generation of a subset of MHC class I-presented antigenic peptides (20S-PA28 complex). The chain is Proteasome subunit beta type-1 from Homo sapiens (Human).